Here is a 109-residue protein sequence, read N- to C-terminus: Cytochrome c oxidase subunit 6A1, mitochondrial (109 aa).

The transit peptide at 1–24 (MAAAAGSRVFGLLGRSRLQLSRCM) directs the protein to the mitochondrion. The Mitochondrial matrix segment spans residues 25-34 (SSGAHGEEGS). The chain crosses the membrane as a helical span at residues 35-59 (ARMWKALTYFVALPGVGVSMLNVFL). Residues 60 to 109 (KSHHGEEERPEFVAYPHLRIRSKPFPWGDGNHTLFHNPHVNPLPTGYEDE) lie on the Mitochondrial intermembrane side of the membrane.

This sequence belongs to the cytochrome c oxidase subunit 6A family. In terms of assembly, component of the cytochrome c oxidase (complex IV, CIV), a multisubunit enzyme composed of 14 subunits. The complex is composed of a catalytic core of 3 subunits MT-CO1, MT-CO2 and MT-CO3, encoded in the mitochondrial DNA, and 11 supernumerary subunits COX4I1 (or COX4I2), COX5A, COX5B, COX6A2 (or COX6A1), COX6B1 (or COX6B2), COX6C, COX7A1 (or COX7A2), COX7B, COX7C, COX8B and NDUFA4, which are encoded in the nuclear genome. The complex exists as a monomer or a dimer and forms supercomplexes (SCs) in the inner mitochondrial membrane with NADH-ubiquinone oxidoreductase (complex I, CI) and ubiquinol-cytochrome c oxidoreductase (cytochrome b-c1 complex, complex III, CIII), resulting in different assemblies (supercomplex SCI(1)III(2)IV(1) and megacomplex MCI(2)III(2)IV(2)).

It localises to the mitochondrion inner membrane. Its pathway is energy metabolism; oxidative phosphorylation. Functionally, component of the cytochrome c oxidase, the last enzyme in the mitochondrial electron transport chain which drives oxidative phosphorylation. The respiratory chain contains 3 multisubunit complexes succinate dehydrogenase (complex II, CII), ubiquinol-cytochrome c oxidoreductase (cytochrome b-c1 complex, complex III, CIII) and cytochrome c oxidase (complex IV, CIV), that cooperate to transfer electrons derived from NADH and succinate to molecular oxygen, creating an electrochemical gradient over the inner membrane that drives transmembrane transport and the ATP synthase. Cytochrome c oxidase is the component of the respiratory chain that catalyzes the reduction of oxygen to water. Electrons originating from reduced cytochrome c in the intermembrane space (IMS) are transferred via the dinuclear copper A center (CU(A)) of subunit 2 and heme A of subunit 1 to the active site in subunit 1, a binuclear center (BNC) formed by heme A3 and copper B (CU(B)). The BNC reduces molecular oxygen to 2 water molecules unsing 4 electrons from cytochrome c in the IMS and 4 protons from the mitochondrial matrix. The chain is Cytochrome c oxidase subunit 6A1, mitochondrial (COX6A1) from Bos taurus (Bovine).